Here is a 506-residue protein sequence, read N- to C-terminus: MTTPKPVVLCILDGWGSAEPGPANAPYLAKTPTLDAIMQSCPTARLVTHGPDVGLPSGQMGNSEVGHTNIGAGRVVAMDLGQIDLAIEDGSFYDNDALQAFIAKLKETGGAAHLMGLVSDGGVHGHVTHILAAIKAIRDAGVPVWLHAITDGRDVAPKSALTYLDQLEAGMAPGAQIATVTGRYFAMDRDNRWERVSEAYDAMVKGAGQFTAATARDAVENAYGRDELDEFVKATVVEGFDGIKEGDGFFCLNFRADRAREILRAIGEPGFAEFDTGPRPALAALLGMVEYSEGHNAYMTTAYPKRAIVNTLGEWVAKQGKRQFRLAETEKYPHVTFFLNGGKETPEVGEDRFMPKSPKVATYDLQPEMSAPEVTAKFVEAIRAGYDLIVTNYANPDMVGHTGDLDAAIKACEAVDQGLGEVVAALKDAGGAMIVTADHGNCELMVDPETGGAHTAHTTNLVPVALVGGPEGTALKDGRLADLAPTLLALMGLDQPEEMTGESLLV.

Mn(2+) contacts are provided by D13 and S63. S63 acts as the Phosphoserine intermediate in catalysis. Substrate is bound by residues H124, 153-154 (RD), R183, R189, 255-258 (RADR), and K331. 5 residues coordinate Mn(2+): D397, H401, D438, H439, and H457.

It belongs to the BPG-independent phosphoglycerate mutase family. Monomer. The cofactor is Mn(2+).

It catalyses the reaction (2R)-2-phosphoglycerate = (2R)-3-phosphoglycerate. It participates in carbohydrate degradation; glycolysis; pyruvate from D-glyceraldehyde 3-phosphate: step 3/5. Functionally, catalyzes the interconversion of 2-phosphoglycerate and 3-phosphoglycerate. The protein is 2,3-bisphosphoglycerate-independent phosphoglycerate mutase of Ruegeria sp. (strain TM1040) (Silicibacter sp.).